A 457-amino-acid chain; its full sequence is Argininosuccinate lyase (457 aa).

Belongs to the lyase 1 family. Argininosuccinate lyase subfamily.

The protein localises to the cytoplasm. It carries out the reaction 2-(N(omega)-L-arginino)succinate = fumarate + L-arginine. The protein operates within amino-acid biosynthesis; L-arginine biosynthesis; L-arginine from L-ornithine and carbamoyl phosphate: step 3/3. This Pectobacterium carotovorum subsp. carotovorum (strain PC1) protein is Argininosuccinate lyase.